Consider the following 326-residue polypeptide: DNA-directed RNA polymerase subunit alpha (326 aa).

The segment at 1 to 231 is alpha N-terminal domain (alpha-NTD); the sequence is MQTALLKPKI…DQLSVFAALE (231 aa). Residues 247-326 are alpha C-terminal domain (alpha-CTD); sequence IDPILLRPVD…ENWPPAGLEK (80 aa).

This sequence belongs to the RNA polymerase alpha chain family. In terms of assembly, homodimer. The RNAP catalytic core consists of 2 alpha, 1 beta, 1 beta' and 1 omega subunit. When a sigma factor is associated with the core the holoenzyme is formed, which can initiate transcription.

It carries out the reaction RNA(n) + a ribonucleoside 5'-triphosphate = RNA(n+1) + diphosphate. Its function is as follows. DNA-dependent RNA polymerase catalyzes the transcription of DNA into RNA using the four ribonucleoside triphosphates as substrates. This is DNA-directed RNA polymerase subunit alpha from Cupriavidus necator (strain ATCC 17699 / DSM 428 / KCTC 22496 / NCIMB 10442 / H16 / Stanier 337) (Ralstonia eutropha).